The primary structure comprises 186 residues: Ribosome-recycling factor (186 aa).

This sequence belongs to the RRF family.

The protein localises to the cytoplasm. In terms of biological role, responsible for the release of ribosomes from messenger RNA at the termination of protein biosynthesis. May increase the efficiency of translation by recycling ribosomes from one round of translation to another. In Polynucleobacter asymbioticus (strain DSM 18221 / CIP 109841 / QLW-P1DMWA-1) (Polynucleobacter necessarius subsp. asymbioticus), this protein is Ribosome-recycling factor.